Reading from the N-terminus, the 469-residue chain is Glutamate--tRNA ligase (469 aa).

The short motif at 9–19 (PSPTGFLHVGG) is the 'HIGH' region element. Residues 236–240 (KLSKR) carry the 'KMSKS' region motif. Lysine 239 is an ATP binding site.

It belongs to the class-I aminoacyl-tRNA synthetase family. Glutamate--tRNA ligase type 1 subfamily. Monomer.

It is found in the cytoplasm. The enzyme catalyses tRNA(Glu) + L-glutamate + ATP = L-glutamyl-tRNA(Glu) + AMP + diphosphate. Catalyzes the attachment of glutamate to tRNA(Glu) in a two-step reaction: glutamate is first activated by ATP to form Glu-AMP and then transferred to the acceptor end of tRNA(Glu). This chain is Glutamate--tRNA ligase, found in Shewanella frigidimarina (strain NCIMB 400).